Reading from the N-terminus, the 1401-residue chain is DNA-directed RNA polymerase subunit beta (1401 aa).

This sequence belongs to the RNA polymerase beta chain family. The RNAP catalytic core consists of 2 alpha, 1 beta, 1 beta' and 1 omega subunit. When a sigma factor is associated with the core the holoenzyme is formed, which can initiate transcription.

The catalysed reaction is RNA(n) + a ribonucleoside 5'-triphosphate = RNA(n+1) + diphosphate. Functionally, DNA-dependent RNA polymerase catalyzes the transcription of DNA into RNA using the four ribonucleoside triphosphates as substrates. This is DNA-directed RNA polymerase subunit beta from Desulforapulum autotrophicum (strain ATCC 43914 / DSM 3382 / VKM B-1955 / HRM2) (Desulfobacterium autotrophicum).